Here is a 655-residue protein sequence, read N- to C-terminus: Tetratricopeptide repeat protein 30 homolog (655 aa).

TPR repeat units follow at residues 10-43 (EGHVTRTIYNLIKDKRYEDVIECITSFGEAANTR), 44-76 (AGLSTLGHCYYHAQKYEEAATCYEQLCQLAPKE), 143-176 (ADTLNDEGCLLFQADQHEAAVQRFQAALQVGGFN), 178-210 (LVAYNVALAHFQKKQRAQALDYTSEIVERGMRN), 385-418 (LAAKVQEVRATNEQQALRDALKDYEQALELYLPV), 450-484 (SIWRLNAGHVLFMQGDKYNEAAAFYEPIVRQHSDD), and 534-567 (CIVNLVVGTLYCAKSNYEFGLSRIAHALESGSGN).

Belongs to the TTC30/dfy-1/fleer family.

It localises to the cell projection. It is found in the cilium. In terms of biological role, required for polyglutamylation of axonemal tubulin in sensory cilia. Plays a role in anterograde intraflagellar transport (IFT), the process by which cilia precursors are transported from the base of the cilium to the site of their incorporation at the tip. In Drosophila melanogaster (Fruit fly), this protein is Tetratricopeptide repeat protein 30 homolog.